Here is a 534-residue protein sequence, read N- to C-terminus: CTP synthase (534 aa).

An amidoligase domain region spans residues 1 to 265 (MKYIIVTGGV…SNYLLKKLIL (265 aa)). Serine 12 contacts CTP. Serine 12 is a binding site for UTP. An ATP-binding site is contributed by 13 to 18 (GLGKGI). Tyrosine 53 serves as a coordination point for L-glutamine. Aspartate 70 is an ATP binding site. Residues aspartate 70 and glutamate 140 each contribute to the Mg(2+) site. CTP-binding positions include 147–149 (DIE), 186–191 (KTKPTQ), and lysine 222. UTP contacts are provided by residues 186–191 (KTKPTQ) and lysine 222. Positions 289 to 530 (NVAIVGKYTH…MGAMLKKSKE (242 aa)) constitute a Glutamine amidotransferase type-1 domain. Glycine 352 contacts L-glutamine. Cysteine 379 acts as the Nucleophile; for glutamine hydrolysis in catalysis. L-glutamine contacts are provided by residues 380 to 383 (LGMQ), glutamate 403, and arginine 460. Catalysis depends on residues histidine 503 and glutamate 505.

This sequence belongs to the CTP synthase family. Homotetramer.

The enzyme catalyses UTP + L-glutamine + ATP + H2O = CTP + L-glutamate + ADP + phosphate + 2 H(+). The catalysed reaction is L-glutamine + H2O = L-glutamate + NH4(+). It catalyses the reaction UTP + NH4(+) + ATP = CTP + ADP + phosphate + 2 H(+). Its pathway is pyrimidine metabolism; CTP biosynthesis via de novo pathway; CTP from UDP: step 2/2. With respect to regulation, allosterically activated by GTP, when glutamine is the substrate; GTP has no effect on the reaction when ammonia is the substrate. The allosteric effector GTP functions by stabilizing the protein conformation that binds the tetrahedral intermediate(s) formed during glutamine hydrolysis. Inhibited by the product CTP, via allosteric rather than competitive inhibition. Its function is as follows. Catalyzes the ATP-dependent amination of UTP to CTP with either L-glutamine or ammonia as the source of nitrogen. Regulates intracellular CTP levels through interactions with the four ribonucleotide triphosphates. In Methanococcoides burtonii (strain DSM 6242 / NBRC 107633 / OCM 468 / ACE-M), this protein is CTP synthase.